The primary structure comprises 251 residues: Probable transcriptional regulatory protein Pmob_0807 (251 aa).

Residues 1 to 22 (MSGHNKWANIKHRKGAQDAKRS) are disordered.

The protein belongs to the TACO1 family.

The protein localises to the cytoplasm. This is Probable transcriptional regulatory protein Pmob_0807 from Petrotoga mobilis (strain DSM 10674 / SJ95).